The sequence spans 86 residues: Sec-independent protein translocase protein TatA (86 aa).

A helical membrane pass occupies residues 1–21 (MGGISIWQLLIIAVIVVLLFG). The disordered stretch occupies residues 42-86 (AIGDDNQPQQAQKTSSDADFETKNITEKQSVAQSETSESKNKEQV). Composition is skewed to polar residues over residues 47–58 (NQPQQAQKTSSD) and 68–77 (EKQSVAQSET).

Belongs to the TatA/E family. In terms of assembly, the Tat system comprises two distinct complexes: a TatABC complex, containing multiple copies of TatA, TatB and TatC subunits, and a separate TatA complex, containing only TatA subunits. Substrates initially bind to the TatABC complex, which probably triggers association of the separate TatA complex to form the active translocon.

The protein localises to the cell inner membrane. Part of the twin-arginine translocation (Tat) system that transports large folded proteins containing a characteristic twin-arginine motif in their signal peptide across membranes. TatA could form the protein-conducting channel of the Tat system. This Photorhabdus laumondii subsp. laumondii (strain DSM 15139 / CIP 105565 / TT01) (Photorhabdus luminescens subsp. laumondii) protein is Sec-independent protein translocase protein TatA.